The sequence spans 306 residues: Immune protein Tsi7 (306 aa).

Interacts with Tse7.

Its function is as follows. Immunity protein that plays a role in preventing early activation of toxin Tse7. Protects thereby cells from Tse7 DNase activity. In Pseudomonas aeruginosa (strain ATCC 15692 / DSM 22644 / CIP 104116 / JCM 14847 / LMG 12228 / 1C / PRS 101 / PAO1), this protein is Immune protein Tsi7.